The sequence spans 121 residues: Protein SNORC (121 aa).

An N-terminal signal peptide occupies residues 1–24 (MASCLALRMALLLVSGVLAPAVLT). Residues 25-92 (DDVPQEPVPT…QGGGSLGPGA (68 aa)) are Extracellular-facing. The disordered stretch occupies residues 28–84 (PQEPVPTLWNEPAELPSGEGPVESTSPGREPVDTGPPAPTVAPGPEDSTAQERLDQG). Residues 93–113 (IAAIVIAALLATCVVLALVVV) form a helical membrane-spanning segment. Residues 114–121 (ALRKFSAS) lie on the Cytoplasmic side of the membrane.

Interacts (via the extracellular domain) with FGF2. Expressed in cartilage.

The protein localises to the membrane. It localises to the cytoplasm. It is found in the secreted. The protein resides in the extracellular space. Its subcellular location is the extracellular matrix. Its function is as follows. Plays a role in the regulation of chondrocyte maturation and postnatal endochondral ossification. May inhibit cell growth stimulation induced by FGF2. In Homo sapiens (Human), this protein is Protein SNORC.